The primary structure comprises 272 residues: uncharacterized protein (272 aa).

Positions 1–20 are cleaved as a signal peptide; that stretch reads MMEPKSIFLLGLLLFRVGKL.

This is an uncharacterized protein from Caenorhabditis elegans.